Here is a 139-residue protein sequence, read N- to C-terminus: Asp-hemolysin (139 aa).

Residues 1 to 5 (MASVQ) constitute a propeptide that is removed on maturation. Residues 47–79 (TSEDVQQKTAPPGGSVNVNSCGRSDASSGTTGG) are disordered. Positions 62-75 (VNVNSCGRSDASSG) are enriched in polar residues.

It belongs to the aegerolysin family.

The chain is Asp-hemolysin from Aspergillus fumigatus (strain ATCC MYA-4609 / CBS 101355 / FGSC A1100 / Af293) (Neosartorya fumigata).